Consider the following 159-residue polypeptide: MDPALRSYHQRLRLYTPVAMGINLAASSQPLDPEGPIAVTPRPPIRPSSGKAPHPEAPRRSPNWATAGEVDVGDELIAISDERGPPRHDRPPLATSTAPSPHPRPPGYTAVVSPMALQAVDAPSLFVAWLAARWLRGASGLGAVLCGIAWYVTSIARGA.

Residues S27–G107 are disordered. Basic and acidic residues predominate over residues S80–P91.

It belongs to the HHV-1 US8.5 protein family. Post-translationally, phosphorylated.

It is found in the host nucleus. It localises to the host nucleolus. The polypeptide is Protein US8.5 (Human herpesvirus 1 (strain 17) (HHV-1)).